A 154-amino-acid chain; its full sequence is Myoglobin (154 aa).

The 147-residue stretch at 2-148 (GLSDGEWQLV…FRNDIAAKYK (147 aa)) folds into the Globin domain. At S4 the chain carries Phosphoserine. H65 lines the nitrite pocket. H65 lines the O2 pocket. A Phosphothreonine modification is found at T68. Residue H94 coordinates heme b.

This sequence belongs to the globin family. In terms of assembly, monomeric.

The protein localises to the cytoplasm. It is found in the sarcoplasm. It catalyses the reaction Fe(III)-heme b-[protein] + nitric oxide + H2O = Fe(II)-heme b-[protein] + nitrite + 2 H(+). The catalysed reaction is H2O2 + AH2 = A + 2 H2O. Its function is as follows. Monomeric heme protein which primary function is to store oxygen and facilitate its diffusion within muscle tissues. Reversibly binds oxygen through a pentacoordinated heme iron and enables its timely and efficient release as needed during periods of heightened demand. Depending on the oxidative conditions of tissues and cells, and in addition to its ability to bind oxygen, it also has a nitrite reductase activity whereby it regulates the production of bioactive nitric oxide. Under stress conditions, like hypoxia and anoxia, it also protects cells against reactive oxygen species thanks to its pseudoperoxidase activity. The protein is Myoglobin (MB) of Vulpes chama (Cape fox).